A 296-amino-acid chain; its full sequence is CDP-diacylglycerol--glycerol-3-phosphate 3-phosphatidyltransferase 1, chloroplastic/mitochondrial (296 aa).

A chloroplast and mitochondrion-targeting transit peptide spans 1-39 (MLRSGLASLIVDVNLRRTLRPSPTFSFPAHLSRCIITSR). Residues 62–82 (FSSSSSSEQSRPTSSSRNSFS) are compositionally biased toward low complexity. The tract at residues 62–103 (FSSSSSSEQSRPTSSSRNSFSGHGQLDSDDNSSPPPSQSSSK) is disordered. Helical transmembrane passes span 104 to 124 (VLTL…LLVA), 126 to 146 (FYVD…AAAI), 164 to 184 (FGAF…LILL), 189 to 209 (IQVA…IAII), and 261 to 281 (VGWL…LSVW).

Belongs to the CDP-alcohol phosphatidyltransferase class-I family. Mn(2+) is required as a cofactor.

It is found in the plastid. The protein localises to the chloroplast membrane. Its subcellular location is the mitochondrion membrane. It carries out the reaction a CDP-1,2-diacyl-sn-glycerol + sn-glycerol 3-phosphate = a 1,2-diacyl-sn-glycero-3-phospho-(1'-sn-glycero-3'-phosphate) + CMP + H(+). It participates in phospholipid metabolism; phosphatidylglycerol biosynthesis; phosphatidylglycerol from CDP-diacylglycerol: step 1/2. Catalyzes the committed step to the synthesis of the acidic phospholipids, including phosphatidylglycerol (PG). Transfers specifically a phosphatidyl group from CDP-diacylglycerol to glycerol-3-phosphate to form phosphatidylglycerophosphate. Cannot catalyze the phosphatidyl group transfer to inositol, serine, choline or phosphatidylglycerol. Possesses high activity with CDP-dipalmitoylglycerol and low activity with CDP-dioleoylglycerol. Essential for chloroplast differentiation and PG accumulation in thylakoids, an essential process for the assembly of antenna-reaction center complexes to optimize energy transfer from antenna pigments, and for subsequent photochemical efficiency of photosystem II (PSII). During cold acclimation (at 5 degrees Celsius), necessary for the photosystem I (PSI) photochemistry, including both reaction center and light-harvesting integrity. But dispensable in mitochondrion, being redundant with PGPS2 for the production of PG and its derivative cardiolipin (CL) in mitochondrial membranes. Together with PGPS2, required for the proper embryo development by providing PG accurate levels. This Arabidopsis thaliana (Mouse-ear cress) protein is CDP-diacylglycerol--glycerol-3-phosphate 3-phosphatidyltransferase 1, chloroplastic/mitochondrial.